The sequence spans 291 residues: Light-independent protochlorophyllide reductase iron-sulfur ATP-binding protein (291 aa).

Residues 10–15 (GIGKST) and Lys-39 each bind ATP. Ser-14 lines the Mg(2+) pocket. Positions 95 and 129 each coordinate [4Fe-4S] cluster. 180–181 (NR) provides a ligand contact to ATP.

It belongs to the NifH/BchL/ChlL family. As to quaternary structure, homodimer. Protochlorophyllide reductase is composed of three subunits; ChlL, ChlN and ChlB. [4Fe-4S] cluster serves as cofactor.

The protein localises to the plastid. Its subcellular location is the chloroplast. It catalyses the reaction chlorophyllide a + oxidized 2[4Fe-4S]-[ferredoxin] + 2 ADP + 2 phosphate = protochlorophyllide a + reduced 2[4Fe-4S]-[ferredoxin] + 2 ATP + 2 H2O. Its pathway is porphyrin-containing compound metabolism; chlorophyll biosynthesis (light-independent). Functionally, component of the dark-operative protochlorophyllide reductase (DPOR) that uses Mg-ATP and reduced ferredoxin to reduce ring D of protochlorophyllide (Pchlide) to form chlorophyllide a (Chlide). This reaction is light-independent. The L component serves as a unique electron donor to the NB-component of the complex, and binds Mg-ATP. The chain is Light-independent protochlorophyllide reductase iron-sulfur ATP-binding protein from Pinus contorta (Shore pine).